The chain runs to 261 residues: 5-oxoprolinase subunit A (261 aa).

Belongs to the LamB/PxpA family. Forms a complex composed of PxpA, PxpB and PxpC.

The catalysed reaction is 5-oxo-L-proline + ATP + 2 H2O = L-glutamate + ADP + phosphate + H(+). Functionally, catalyzes the cleavage of 5-oxoproline to form L-glutamate coupled to the hydrolysis of ATP to ADP and inorganic phosphate. This Coprothermobacter proteolyticus (strain ATCC 35245 / DSM 5265 / OCM 4 / BT) protein is 5-oxoprolinase subunit A.